The sequence spans 496 residues: Probable CtpA-like serine protease (496 aa).

Over residues methionine 1–glutamate 16 the composition is skewed to basic and acidic residues. Residues methionine 1–asparagine 27 form a disordered region. Polar residues predominate over residues alanine 18 to asparagine 27. A helical membrane pass occupies residues phenylalanine 39 to isoleucine 59. In terms of domain architecture, PDZ spans threonine 124–glycine 206. Residues serine 329, aspartate 340, and lysine 354 each act as charge relay system in the active site.

It belongs to the peptidase S41A family.

Its subcellular location is the cell membrane. This Staphylococcus aureus (strain MSSA476) protein is Probable CtpA-like serine protease.